Reading from the N-terminus, the 383-residue chain is Na(+)/H(+) antiporter NhaA (383 aa).

Helical transmembrane passes span 19-39 (AGGVILMVTAALALVIANSPL), 56-76 (VLHGINDGLMAVFFLLVGLEI), 92-112 (ILPGLAALGGMVVPALVFLAL), 122-142 (GWAVPTATDIAFALGVLALLG), 151-171 (IFLTALAIIDDLGAVLVIALF), 174-194 (AKLSWPALVAVAAILALLAAL), 212-232 (LWGAMLQSGVHATVAGIALAL), 255-275 (VGYGIVPIFGFANAGVSFAGL), 292-312 (LLFGKQIGVFGTAWMAIWLGF), 326-346 (GVAVLCGIGFTMSLFIGALAF), and 356-376 (VKVGVLAGSALSAILGSLVLL).

Belongs to the NhaA Na(+)/H(+) (TC 2.A.33) antiporter family.

The protein resides in the cell inner membrane. It catalyses the reaction Na(+)(in) + 2 H(+)(out) = Na(+)(out) + 2 H(+)(in). Na(+)/H(+) antiporter that extrudes sodium in exchange for external protons. This Paramagnetospirillum magneticum (strain ATCC 700264 / AMB-1) (Magnetospirillum magneticum) protein is Na(+)/H(+) antiporter NhaA.